We begin with the raw amino-acid sequence, 127 residues long: Glycine cleavage system H protein (127 aa).

Residues 22-104 enclose the Lipoyl-binding domain; it reads KARIGITHFA…YEKAWMIVVE (83 aa). Residue lysine 63 is modified to N6-lipoyllysine.

Belongs to the GcvH family. The glycine cleavage system is composed of four proteins: P, T, L and H. (R)-lipoate is required as a cofactor.

Its function is as follows. The glycine cleavage system catalyzes the degradation of glycine. The H protein shuttles the methylamine group of glycine from the P protein to the T protein. Is also involved in protein lipoylation via its role as an octanoyl/lipoyl carrier protein intermediate. The polypeptide is Glycine cleavage system H protein (Bacillus subtilis (strain 168)).